The primary structure comprises 140 residues: ATP synthase epsilon chain (140 aa).

This sequence belongs to the ATPase epsilon chain family. In terms of assembly, F-type ATPases have 2 components, CF(1) - the catalytic core - and CF(0) - the membrane proton channel. CF(1) has five subunits: alpha(3), beta(3), gamma(1), delta(1), epsilon(1). CF(0) has three main subunits: a, b and c.

It localises to the cell inner membrane. In terms of biological role, produces ATP from ADP in the presence of a proton gradient across the membrane. The sequence is that of ATP synthase epsilon chain from Neisseria meningitidis serogroup C / serotype 2a (strain ATCC 700532 / DSM 15464 / FAM18).